We begin with the raw amino-acid sequence, 94 residues long: Preprofallaxidin-9 (94 aa).

A signal peptide spans 1-22 (MASLKKSLFLVLFLGLVSLSIC). Residues 23 to 46 (EEEKRENEEDAEDENHEEESEEKR) constitute a propeptide that is removed on maturation. A disordered region spans residues 27 to 46 (RENEEDAEDENHEEESEEKR). The segment covering 30 to 42 (EEDAEDENHEEES) has biased composition (acidic residues). A Leucine amide modification is found at Leu-62. The propeptide occupies 66-70 (SEEKR). Met-75 bears the Methionine amide mark. Residues 79-83 (SEEKR) constitute a propeptide that is removed on maturation. Met-88 is subject to Methionine amide. Residues 92-94 (SEE) constitute a propeptide that is removed on maturation.

Belongs to the frog skin active peptide (FSAP) family. Brevinin subfamily. Expressed by the skin glands.

The protein localises to the secreted. Its function is as follows. Fallaxidin-1.3 shows no antibacterial activity against Gram-positive or Gram-negative bacteria. Does not inhibit the formation of NO by neuronal nitric oxide synthase. Has no effect on splenocyte proliferation or smooth muscle contraction. Fallaxidin-3.2 shows antibacterial activity against the Gram-positive bacteria E.faecalis (MIC=100 uM) and L.lactis (MIC=500 uM). No antibacterial activity against the Gram-positive bacteria B.cereus, L.innocua, M.luteus, S.epidermidis, S.uberis and S.aureus, or the Gram-negative bacteria E.cloacae and E.coli. In Litoria fallax (Eastern dwarf tree frog), this protein is Preprofallaxidin-9.